The primary structure comprises 503 residues: MLKRFVNSIWEICQKDKFQRFTPVADAIDTFCYEPIHKSSSPPFIRDAVDVKRWMILVVVALFPATFSAIWNSGVQSLVYGSGNAQLMEAFLHISGFRSYLSFIFHDVGVFSVLWAGYKIFLPLLIISYSVGGACEVLFAVIRKHKIAEGLLVTGILYPLTLPPTIPYWMAALGIAFGVVVSKELFGGTGMNILNPALSGRAFLFFSFPAKMSGDVWVGSNPMKIKESLLAMNSTAGKSIIDGFSQSTCLHTLNSTPPSVKRVHVDAIASNILHMTHVPTQNVIQSQFSIWTESHPGLMLDKLTLEQLQSFVTSPLSEGGLGLLPTQFDSAYAITDVIYGIGKFSSGNLFWGNIVGSLGETSTFACLLGAIFLIVTGIASWRTMVSFGIGAFVTAWLFKIVSILIVGKHGAWAPARFFIPAYRQLFLGGLAFGLVFMATDPVSSPTMKLAKWIYGLFIGFMTILIRLINPAYPEGVMLAILLGNVFAPLLDYFAVRKYRRRRI.

4 helical membrane-spanning segments follow: residues 55–75 (MILV…NSGV), 120–142 (IFLP…FAVI), 161–181 (TLPP…GVVV), and 186–206 (FGGT…FLFF). An FMN phosphoryl threonine modification is found at Thr248. A run of 5 helical transmembrane segments spans residues 361 to 381 (TSTF…IASW), 387 to 407 (FGIG…LIVG), 417 to 437 (FFIP…LVFM), 452 to 472 (WIYG…NPAY), and 475 to 495 (GVML…YFAV).

The protein belongs to the NqrB/RnfD family. As to quaternary structure, composed of six subunits; NqrA, NqrB, NqrC, NqrD, NqrE and NqrF. FMN is required as a cofactor.

The protein localises to the cell inner membrane. The catalysed reaction is a ubiquinone + n Na(+)(in) + NADH + H(+) = a ubiquinol + n Na(+)(out) + NAD(+). In terms of biological role, NQR complex catalyzes the reduction of ubiquinone-1 to ubiquinol by two successive reactions, coupled with the transport of Na(+) ions from the cytoplasm to the periplasm. NqrA to NqrE are probably involved in the second step, the conversion of ubisemiquinone to ubiquinol. This Chlamydia felis (strain Fe/C-56) (Chlamydophila felis) protein is Na(+)-translocating NADH-quinone reductase subunit B.